A 1105-amino-acid chain; its full sequence is Integrator complex subunit 2 (1105 aa).

A helical membrane pass occupies residues 822–842 (FVFCSPYLLMILLRILKGSLA).

It belongs to the Integrator subunit 2 family. In terms of assembly, belongs to the multiprotein complex Integrator, at least composed of IntS1, IntS2, IntS3, IntS4, omd/IntS5, IntS6, defl/IntS7, IntS8, IntS9, IntS10, IntS11, IntS12, asun/IntS13, IntS14 and IntS15. The core complex associates with protein phosphatase 2A subunits mts/PP2A and Pp2A-29B, to form the Integrator-PP2A (INTAC) complex.

It is found in the nucleus membrane. It localises to the nucleus. In terms of biological role, component of the integrator complex, a multiprotein complex that terminates RNA polymerase II (Pol II) transcription in the promoter-proximal region of genes. The integrator complex provides a quality checkpoint during transcription elongation by driving premature transcription termination of transcripts that are unfavorably configured for transcriptional elongation: the complex terminates transcription by (1) catalyzing dephosphorylation of the C-terminal domain (CTD) of Pol II subunit Polr2A/Rbp1 and Spt5, and (2) degrading the exiting nascent RNA transcript via endonuclease activity. The integrator complex is also involved in the 3'-end processing of the U7 snRNA, and also the spliceosomal snRNAs U1, U2, U4 and U5. The protein is Integrator complex subunit 2 of Drosophila melanogaster (Fruit fly).